Consider the following 182-residue polypeptide: ATP synthase subunit delta (182 aa).

It belongs to the ATPase delta chain family. F-type ATPases have 2 components, F(1) - the catalytic core - and F(0) - the membrane proton channel. F(1) has five subunits: alpha(3), beta(3), gamma(1), delta(1), epsilon(1). F(0) has three main subunits: a(1), b(2) and c(10-14). The alpha and beta chains form an alternating ring which encloses part of the gamma chain. F(1) is attached to F(0) by a central stalk formed by the gamma and epsilon chains, while a peripheral stalk is formed by the delta and b chains.

It localises to the cell membrane. In terms of biological role, f(1)F(0) ATP synthase produces ATP from ADP in the presence of a proton or sodium gradient. F-type ATPases consist of two structural domains, F(1) containing the extramembraneous catalytic core and F(0) containing the membrane proton channel, linked together by a central stalk and a peripheral stalk. During catalysis, ATP synthesis in the catalytic domain of F(1) is coupled via a rotary mechanism of the central stalk subunits to proton translocation. This protein is part of the stalk that links CF(0) to CF(1). It either transmits conformational changes from CF(0) to CF(1) or is implicated in proton conduction. This chain is ATP synthase subunit delta, found in Alkalihalophilus pseudofirmus (strain ATCC BAA-2126 / JCM 17055 / OF4) (Bacillus pseudofirmus).